The primary structure comprises 194 residues: ATP-dependent Clp protease proteolytic subunit (194 aa).

Residue Ser97 is the Nucleophile of the active site. The active site involves His122.

Belongs to the peptidase S14 family. As to quaternary structure, fourteen ClpP subunits assemble into 2 heptameric rings which stack back to back to give a disk-like structure with a central cavity, resembling the structure of eukaryotic proteasomes.

The protein resides in the cytoplasm. The enzyme catalyses Hydrolysis of proteins to small peptides in the presence of ATP and magnesium. alpha-casein is the usual test substrate. In the absence of ATP, only oligopeptides shorter than five residues are hydrolyzed (such as succinyl-Leu-Tyr-|-NHMec, and Leu-Tyr-Leu-|-Tyr-Trp, in which cleavage of the -Tyr-|-Leu- and -Tyr-|-Trp bonds also occurs).. In terms of biological role, cleaves peptides in various proteins in a process that requires ATP hydrolysis. Has a chymotrypsin-like activity. Plays a major role in the degradation of misfolded proteins. This is ATP-dependent Clp protease proteolytic subunit from Campylobacter jejuni subsp. jejuni serotype O:6 (strain 81116 / NCTC 11828).